The chain runs to 734 residues: Homoaconitase, mitochondrial (734 aa).

The transit peptide at 1–25 (MGASNLLRFGAVTRISTPLLSRRSL) directs the protein to the mitochondrion. [4Fe-4S] cluster-binding residues include C367, C427, and C430.

This sequence belongs to the aconitase/IPM isomerase family. It depends on [4Fe-4S] cluster as a cofactor.

It is found in the mitochondrion. It catalyses the reaction (2R,3S)-homoisocitrate = cis-homoaconitate + H2O. Its pathway is amino-acid biosynthesis; L-lysine biosynthesis via AAA pathway; L-alpha-aminoadipate from 2-oxoglutarate: step 3/5. Catalyzes the reversible hydration of cis-homoaconitate to (2R,3S)-homoisocitrate, a step in the alpha-aminoadipate pathway for lysine biosynthesis. The chain is Homoaconitase, mitochondrial (LYS4) from Mycosarcoma maydis (Corn smut fungus).